The sequence spans 378 residues: Apolipoprotein A-IV (378 aa).

An N-terminal signal peptide occupies residues 1-20 (MFLKAVVLTLSLVAITGARA). 13 tandem repeats follow at residues 33–54 (DYFS…QSEL), 60–81 (SVTK…RNSW), 82–98 (EHSR…RQVG), 110–130 (PNCD…QAVG), 131–152 (PYAE…NQLT), 153–174 (SHAQ…SSLT), 175–196 (PFAD…GHLT), 197–218 (PYTD…RSLA), 219–240 (PYAQ…FQMK), 241–262 (KNAE…QRLA), 263–280 (PVAE…AGLH), 281–302 (KSLA…RNVG), and 303–324 (PYGE…QKLG). The tract at residues 33 to 324 (DYFSQLSNNA…QVEELRQKLG (292 aa)) is 13 X 22 AA approximate tandem repeats. The segment at 354-378 (EKESQDTPVALPKQEQEQSAVPLES) is disordered.

It belongs to the apolipoprotein A1/A4/E family. As to quaternary structure, homodimer.

It is found in the secreted. Functionally, may have a role in chylomicrons and VLDL secretion and catabolism. Required for efficient activation of lipoprotein lipase by ApoC-II; potent activator of LCAT. Apoa-IV is a major component of HDL and chylomicrons. In Canis lupus familiaris (Dog), this protein is Apolipoprotein A-IV.